Consider the following 233-residue polypeptide: Type IV secretion system protein PtlE homolog (233 aa).

The chain crosses the membrane as a helical span at residues 42–62 (VAWAALAVTALSLIAIATMLP).

Belongs to the virB8 family.

The protein resides in the cell inner membrane. The polypeptide is Type IV secretion system protein PtlE homolog (ptlE) (Bordetella parapertussis (strain 12822 / ATCC BAA-587 / NCTC 13253)).